The following is a 300-amino-acid chain: 33 kDa chaperonin (300 aa).

Intrachain disulfides connect Cys235–Cys237 and Cys269–Cys272.

It belongs to the HSP33 family. In terms of processing, under oxidizing conditions two disulfide bonds are formed involving the reactive cysteines. Under reducing conditions zinc is bound to the reactive cysteines and the protein is inactive.

It localises to the cytoplasm. Redox regulated molecular chaperone. Protects both thermally unfolding and oxidatively damaged proteins from irreversible aggregation. Plays an important role in the bacterial defense system toward oxidative stress. In Pseudomonas fluorescens (strain SBW25), this protein is 33 kDa chaperonin.